We begin with the raw amino-acid sequence, 252 residues long: 5-oxoprolinase subunit A 1 (252 aa).

This sequence belongs to the LamB/PxpA family. In terms of assembly, forms a complex composed of PxpA, PxpB and PxpC.

It catalyses the reaction 5-oxo-L-proline + ATP + 2 H2O = L-glutamate + ADP + phosphate + H(+). Its function is as follows. Catalyzes the cleavage of 5-oxoproline to form L-glutamate coupled to the hydrolysis of ATP to ADP and inorganic phosphate. The protein is 5-oxoprolinase subunit A 1 of Pseudomonas putida (strain ATCC 47054 / DSM 6125 / CFBP 8728 / NCIMB 11950 / KT2440).